The primary structure comprises 258 residues: Imidazole glycerol phosphate synthase subunit HisF (258 aa).

Active-site residues include Asp-11 and Asp-130.

It belongs to the HisA/HisF family. In terms of assembly, heterodimer of HisH and HisF.

It is found in the cytoplasm. The catalysed reaction is 5-[(5-phospho-1-deoxy-D-ribulos-1-ylimino)methylamino]-1-(5-phospho-beta-D-ribosyl)imidazole-4-carboxamide + L-glutamine = D-erythro-1-(imidazol-4-yl)glycerol 3-phosphate + 5-amino-1-(5-phospho-beta-D-ribosyl)imidazole-4-carboxamide + L-glutamate + H(+). The protein operates within amino-acid biosynthesis; L-histidine biosynthesis; L-histidine from 5-phospho-alpha-D-ribose 1-diphosphate: step 5/9. IGPS catalyzes the conversion of PRFAR and glutamine to IGP, AICAR and glutamate. The HisF subunit catalyzes the cyclization activity that produces IGP and AICAR from PRFAR using the ammonia provided by the HisH subunit. The sequence is that of Imidazole glycerol phosphate synthase subunit HisF from Bradyrhizobium sp. (strain ORS 278).